We begin with the raw amino-acid sequence, 831 residues long: Translation initiation factor IF-2 (831 aa).

The region spanning 329–499 (TRAPVVTVMG…LLISEMQDLK (171 aa)) is the tr-type G domain. The G1 stretch occupies residues 338–345 (GHVDHGKT). Residue 338-345 (GHVDHGKT) participates in GTP binding. The interval 363–367 (GITQH) is G2. The interval 385–388 (DTPG) is G3. GTP-binding positions include 385-389 (DTPGH) and 439-442 (NKID). The interval 439 to 442 (NKID) is G4. A G5 region spans residues 475–477 (SAL).

It belongs to the TRAFAC class translation factor GTPase superfamily. Classic translation factor GTPase family. IF-2 subfamily.

Its subcellular location is the cytoplasm. In terms of biological role, one of the essential components for the initiation of protein synthesis. Protects formylmethionyl-tRNA from spontaneous hydrolysis and promotes its binding to the 30S ribosomal subunits. Also involved in the hydrolysis of GTP during the formation of the 70S ribosomal complex. This is Translation initiation factor IF-2 from Rickettsia typhi (strain ATCC VR-144 / Wilmington).